The following is a 186-amino-acid chain: uncharacterized protein (186 aa).

An N-terminal signal peptide occupies residues 1-21; the sequence is MIHVKYIILGFIMVSSLNLYA.

This is an uncharacterized protein from Rickettsia conorii (strain ATCC VR-613 / Malish 7).